The sequence spans 423 residues: Histidine--tRNA ligase (423 aa).

Belongs to the class-II aminoacyl-tRNA synthetase family. In terms of assembly, homodimer.

It is found in the cytoplasm. It catalyses the reaction tRNA(His) + L-histidine + ATP = L-histidyl-tRNA(His) + AMP + diphosphate + H(+). In Geobacillus sp. (strain WCH70), this protein is Histidine--tRNA ligase.